We begin with the raw amino-acid sequence, 678 residues long: UvrABC system protein C (678 aa).

The GIY-YIG domain maps to Val-16–Ile-95. Positions Asp-208–Ala-243 constitute a UVR domain. Positions Glu-649–Ala-667 are enriched in low complexity. A disordered region spans residues Glu-649 to Gly-678.

It belongs to the UvrC family. In terms of assembly, interacts with UvrB in an incision complex.

Its subcellular location is the cytoplasm. Functionally, the UvrABC repair system catalyzes the recognition and processing of DNA lesions. UvrC both incises the 5' and 3' sides of the lesion. The N-terminal half is responsible for the 3' incision and the C-terminal half is responsible for the 5' incision. In Mycolicibacterium gilvum (strain PYR-GCK) (Mycobacterium gilvum (strain PYR-GCK)), this protein is UvrABC system protein C.